A 333-amino-acid chain; its full sequence is 6-phosphogluconolactonase (333 aa).

Belongs to the cycloisomerase 2 family.

It catalyses the reaction 6-phospho-D-glucono-1,5-lactone + H2O = 6-phospho-D-gluconate + H(+). It functions in the pathway carbohydrate degradation; pentose phosphate pathway; D-ribulose 5-phosphate from D-glucose 6-phosphate (oxidative stage): step 2/3. Catalyzes the hydrolysis of 6-phosphogluconolactone to 6-phosphogluconate. This Yersinia enterocolitica serotype O:8 / biotype 1B (strain NCTC 13174 / 8081) protein is 6-phosphogluconolactonase.